We begin with the raw amino-acid sequence, 393 residues long: CCCH-type zinc finger protein oma-2 (393 aa).

Residues 1-26 (MDMLKENVIQNNEARTESSVEPSHPD) form a disordered region. A compositionally biased stretch (basic and acidic residues) spans 14 to 26 (ARTESSVEPSHPD). 2 consecutive C3H1-type zinc fingers follow at residues 105–133 (SYKT…HGEE) and 147–175 (KYRT…HPDN). Disordered regions lie at residues 227–251 (TPDE…RYEL) and 311–340 (KQST…LTAA). A compositionally biased stretch (low complexity) spans 313-340 (STPGGVSGYSSSGSTPSQDSDSSPLTAA). Threonine 327 is subject to Phosphothreonine; by GSK3.

Exclusively expressed in the hermaphrodite gonad. Expression only in cellulized oocytes. Widely distributed throughout gonadal oocytes from the mitotic stage to the developing diakinesis stage.

Its subcellular location is the cytoplasm. The protein resides in the cytoplasmic granule. It localises to the cytoskeleton. It is found in the microtubule organizing center. The protein localises to the centrosome. Its function is as follows. Zinc-finger RNA-binding protein that binds to 5'-UA[AU]-3' motifs in the 3'-UTR of maternal mRNAs to suppress translation in oocytes and embryos. Acts redundantly with oma-1 to control the temporal expression and distribution of maternal proteins and thereby promote meiotic progression, oocyte maturation, fertilization and embryonic development. Also, together with oma-1, is involved in P-granule distribution during embryonic development. The sequence is that of CCCH-type zinc finger protein oma-2 from Caenorhabditis elegans.